The sequence spans 260 residues: 5-oxoprolinase subunit A (260 aa).

This sequence belongs to the LamB/PxpA family. As to quaternary structure, forms a complex composed of PxpA, PxpB and PxpC.

The catalysed reaction is 5-oxo-L-proline + ATP + 2 H2O = L-glutamate + ADP + phosphate + H(+). Its function is as follows. Catalyzes the cleavage of 5-oxoproline to form L-glutamate coupled to the hydrolysis of ATP to ADP and inorganic phosphate. This is 5-oxoprolinase subunit A from Methylococcus capsulatus (strain ATCC 33009 / NCIMB 11132 / Bath).